A 276-amino-acid chain; its full sequence is NADPH-dependent 7-cyano-7-deazaguanine reductase (276 aa).

A substrate-binding site is contributed by 83 to 85; sequence IES. 85–86 is a binding site for NADPH; that stretch reads SK. C184 (thioimide intermediate) is an active-site residue. The active-site Proton donor is D191. Residue 223–224 participates in substrate binding; that stretch reads HE. 252-253 provides a ligand contact to NADPH; it reads RG.

Belongs to the GTP cyclohydrolase I family. QueF type 2 subfamily. In terms of assembly, homodimer.

Its subcellular location is the cytoplasm. The catalysed reaction is 7-aminomethyl-7-carbaguanine + 2 NADP(+) = 7-cyano-7-deazaguanine + 2 NADPH + 3 H(+). Its pathway is tRNA modification; tRNA-queuosine biosynthesis. In terms of biological role, catalyzes the NADPH-dependent reduction of 7-cyano-7-deazaguanine (preQ0) to 7-aminomethyl-7-deazaguanine (preQ1). In Pseudomonas putida (strain ATCC 47054 / DSM 6125 / CFBP 8728 / NCIMB 11950 / KT2440), this protein is NADPH-dependent 7-cyano-7-deazaguanine reductase.